The sequence spans 737 residues: Polyribonucleotide nucleotidyltransferase (737 aa).

Asp-489 and Asp-495 together coordinate Mg(2+). The KH domain occupies 556–615; it reads PKIDTIKIDVDKIKIVIGKGGETIDKIIAETGVKIDIDEEGNVSIYSSDQDAINRAKEII. One can recognise an S1 motif domain in the interval 625-693; sequence DEVYRAKVVR…EKGRIDASMK (69 aa). A disordered region spans residues 691–737; the sequence is SMKALLPRPPKPEHDEKGEKSERPHRPRHHKDHKPKKEFTETPKDSE. Residues 700-714 show a composition bias toward basic and acidic residues; sequence PKPEHDEKGEKSERP. Basic residues predominate over residues 715-724; sequence HRPRHHKDHK. Residues 725 to 737 are compositionally biased toward basic and acidic residues; it reads PKKEFTETPKDSE.

The protein belongs to the polyribonucleotide nucleotidyltransferase family. The cofactor is Mg(2+).

The protein localises to the cytoplasm. The enzyme catalyses RNA(n+1) + phosphate = RNA(n) + a ribonucleoside 5'-diphosphate. In terms of biological role, involved in mRNA degradation. Catalyzes the phosphorolysis of single-stranded polyribonucleotides processively in the 3'- to 5'-direction. The sequence is that of Polyribonucleotide nucleotidyltransferase from Streptococcus pneumoniae (strain ATCC 700669 / Spain 23F-1).